The chain runs to 237 residues: MQKQAELYRGKAKTVYSTENPDLLVLEFRNDTSAGDGARIEQFDRKGMVNNKFNYFIMSKLAEAGIPTQMERLLSDTECLVKKLDMVPVECVVRNRAAGSLVKRLGIEEGIELNPPLFDLFLKNDAMHDPMVNESYCETFGWVSKENLARMKELTYKANDVLKKRFDDAGLILVDFKLEFGLYKGEVVLGDEFSPDGSRLWDKETLEKMDKDRFRQSLGGLIEAYEAVARRLGVQLD.

It belongs to the SAICAR synthetase family.

It catalyses the reaction 5-amino-1-(5-phospho-D-ribosyl)imidazole-4-carboxylate + L-aspartate + ATP = (2S)-2-[5-amino-1-(5-phospho-beta-D-ribosyl)imidazole-4-carboxamido]succinate + ADP + phosphate + 2 H(+). The protein operates within purine metabolism; IMP biosynthesis via de novo pathway; 5-amino-1-(5-phospho-D-ribosyl)imidazole-4-carboxamide from 5-amino-1-(5-phospho-D-ribosyl)imidazole-4-carboxylate: step 1/2. In Shigella boydii serotype 4 (strain Sb227), this protein is Phosphoribosylaminoimidazole-succinocarboxamide synthase.